Here is a 108-residue protein sequence, read N- to C-terminus: Urease subunit beta (108 aa).

The protein belongs to the urease beta subunit family. As to quaternary structure, probable heterotrimer of UreA (gamma), UreB (beta) and UreC (alpha) subunits. Three heterotrimers associate to form the active enzyme. The trimeric urease interacts with an accessory complex composed of UreD, UreF and UreG, which is required for the assembly of the nickel containing metallocenter of UreC. The UreE protein may also play a direct role in nickel transfer to the urease apoprotein.

It localises to the cytoplasm. It catalyses the reaction urea + 2 H2O + H(+) = hydrogencarbonate + 2 NH4(+). It functions in the pathway nitrogen metabolism; urea degradation; CO(2) and NH(3) from urea (urease route): step 1/1. This Proteus mirabilis (strain HI4320) protein is Urease subunit beta.